A 483-amino-acid chain; its full sequence is Probable glycine dehydrogenase (decarboxylating) subunit 2 (483 aa).

Lys-264 is subject to N6-(pyridoxal phosphate)lysine.

The protein belongs to the GcvP family. C-terminal subunit subfamily. The glycine cleavage system is composed of four proteins: P, T, L and H. In this organism, the P 'protein' is a heterodimer of two subunits. Requires pyridoxal 5'-phosphate as cofactor.

It catalyses the reaction N(6)-[(R)-lipoyl]-L-lysyl-[glycine-cleavage complex H protein] + glycine + H(+) = N(6)-[(R)-S(8)-aminomethyldihydrolipoyl]-L-lysyl-[glycine-cleavage complex H protein] + CO2. Its function is as follows. The glycine cleavage system catalyzes the degradation of glycine. The P protein binds the alpha-amino group of glycine through its pyridoxal phosphate cofactor; CO(2) is released and the remaining methylamine moiety is then transferred to the lipoamide cofactor of the H protein. The polypeptide is Probable glycine dehydrogenase (decarboxylating) subunit 2 (Nitrosomonas eutropha (strain DSM 101675 / C91 / Nm57)).